We begin with the raw amino-acid sequence, 230 residues long: 3,4-dihydroxy-2-butanone 4-phosphate synthase (230 aa).

D-ribulose 5-phosphate is bound by residues 38–39 (RE), D43, 151–155 (RRGHT), and E175. E39 contributes to the Mg(2+) binding site. H154 is a Mg(2+) binding site.

This sequence belongs to the DHBP synthase family. As to quaternary structure, homodimer. Requires Mg(2+) as cofactor. The cofactor is Mn(2+).

The enzyme catalyses D-ribulose 5-phosphate = (2S)-2-hydroxy-3-oxobutyl phosphate + formate + H(+). Its pathway is cofactor biosynthesis; riboflavin biosynthesis; 2-hydroxy-3-oxobutyl phosphate from D-ribulose 5-phosphate: step 1/1. Catalyzes the conversion of D-ribulose 5-phosphate to formate and 3,4-dihydroxy-2-butanone 4-phosphate. The chain is 3,4-dihydroxy-2-butanone 4-phosphate synthase from Vibrio harveyi (Beneckea harveyi).